The chain runs to 347 residues: L-threonine 3-dehydrogenase (347 aa).

Residue Cys42 participates in Zn(2+) binding. Catalysis depends on charge relay system residues Thr44 and His47. Positions 67, 68, 97, 100, 103, and 111 each coordinate Zn(2+). NAD(+)-binding positions include Ile180, Asp200, Arg205, 267–269 (LSL), and 292–293 (IT).

Belongs to the zinc-containing alcohol dehydrogenase family. As to quaternary structure, homotetramer. It depends on Zn(2+) as a cofactor.

It localises to the cytoplasm. The catalysed reaction is L-threonine + NAD(+) = (2S)-2-amino-3-oxobutanoate + NADH + H(+). It participates in amino-acid degradation; L-threonine degradation via oxydo-reductase pathway; glycine from L-threonine: step 1/2. Functionally, catalyzes the NAD(+)-dependent oxidation of L-threonine to 2-amino-3-ketobutyrate. This Bacillus velezensis (strain DSM 23117 / BGSC 10A6 / LMG 26770 / FZB42) (Bacillus amyloliquefaciens subsp. plantarum) protein is L-threonine 3-dehydrogenase.